Reading from the N-terminus, the 370-residue chain is DNA primase large subunit PriL (370 aa).

[4Fe-4S] cluster contacts are provided by Cys-268, Cys-341, Cys-350, and Cys-354.

This sequence belongs to the eukaryotic-type primase large subunit family. As to quaternary structure, heterodimer of a small subunit (PriS) and a large subunit (PriL). [4Fe-4S] cluster is required as a cofactor.

Its function is as follows. Regulatory subunit of DNA primase, an RNA polymerase that catalyzes the synthesis of short RNA molecules used as primers for DNA polymerase during DNA replication. Stabilizes and modulates the activity of the small subunit, increasing the rate of DNA synthesis, and conferring RNA synthesis capability. The DNA polymerase activity may enable DNA primase to also catalyze primer extension after primer synthesis. May also play a role in DNA repair. The sequence is that of DNA primase large subunit PriL from Archaeoglobus fulgidus (strain ATCC 49558 / DSM 4304 / JCM 9628 / NBRC 100126 / VC-16).